The chain runs to 1040 residues: Multidrug resistance protein MdtB (1040 aa).

12 helical membrane-spanning segments follow: residues 25-45, 342-362, 369-389, 396-416, 440-460, 472-492, 537-557, 863-883, 888-908, 911-931, 967-987, and 998-1018; these read LLMV…PVAA, DTQF…YLFL, IIPG…MVFL, LTLM…IVVI, IGFT…PLLF, FAVT…TLTP, WLTL…WVFI, LGST…VLGV, FIHP…ALLA, IAGS…IGIV, PILM…LSTG, and IGMV…TPVI.

Belongs to the resistance-nodulation-cell division (RND) (TC 2.A.6) family. MdtB subfamily. In terms of assembly, part of a tripartite efflux system composed of MdtA, MdtB and MdtC. MdtB forms a heteromultimer with MdtC.

The protein resides in the cell inner membrane. The chain is Multidrug resistance protein MdtB from Citrobacter koseri (strain ATCC BAA-895 / CDC 4225-83 / SGSC4696).